Consider the following 190-residue polypeptide: DNA dC-&gt;dU-editing enzyme APOBEC-3C (190 aa).

A CMP/dCMP-type deaminase domain is found at 29–138; it reads DRNETWLCFT…PCYQEGLRSL (110 aa). A (Microbial infection) Required for interaction with human foamy virus protein Bet region spans residues 40–86; the sequence is EGIKRRSVVSWKTGVFRNQVDSETHCHAERCFLSWFCDDILSPNTKY. Zn(2+) is bound at residue His66. Residue Glu68 is the Proton donor of the active site. Zn(2+) is bound by residues Cys97 and Cys100.

The protein belongs to the cytidine and deoxycytidylate deaminase family. Homodimer. Interacts with TRIB3. Interacts with AGO2. As to quaternary structure, (Microbial infection) Interacts with human foamy virus protein Bet; this interaction does not induce APOBEC3C degradation but prevents its dimerization and incorporation into the virion by binding of Bet close to or within the APOBEC3C dimerization site. In terms of assembly, (Microbial infection) Interacts with HIV-1 Vif. Zn(2+) serves as cofactor. Expressed in spleen, testes, peripherical blood lymphocytes, heart, thymus, prostate and ovary.

The protein resides in the nucleus. It is found in the cytoplasm. The catalysed reaction is a 2'-deoxycytidine in single-stranded DNA + H2O + H(+) = a 2'-deoxyuridine in single-stranded DNA + NH4(+). (Microbial infection) Antiviral activity is neutralized by the HIV-1 virion infectivity factor (Vif), that prevents its incorporation into progeny HIV-1 virions by both inhibiting its translation and/or by inducing its ubiquitination and subsequent degradation by the 26S proteasome. In terms of biological role, DNA deaminase (cytidine deaminase) which acts as an inhibitor of retrovirus replication and retrotransposon mobility via deaminase-dependent and -independent mechanisms. After the penetration of retroviral nucleocapsids into target cells of infection and the initiation of reverse transcription, it can induce the conversion of cytosine to uracil in the minus-sense single-strand viral DNA, leading to G-to-A hypermutations in the subsequent plus-strand viral DNA. The resultant detrimental levels of mutations in the proviral genome, along with a deamination-independent mechanism that works prior to the proviral integration, together exert efficient antiretroviral effects in infected target cells. Selectively targets single-stranded DNA and does not deaminate double-stranded DNA or single- or double-stranded RNA. Exhibits antiviral activity against simian immunodeficiency virus (SIV), hepatitis B virus (HBV), herpes simplex virus 1 (HHV-1) and Epstein-Barr virus (EBV) and may inhibit the mobility of LTR and non-LTR retrotransposons. May also play a role in the epigenetic regulation of gene expression through the process of active DNA demethylation. This chain is DNA dC-&gt;dU-editing enzyme APOBEC-3C (APOBEC3C), found in Homo sapiens (Human).